The sequence spans 339 residues: Dihydroorotate dehydrogenase (quinone) (339 aa).

FMN contacts are provided by residues 61-65 and Thr-85; that span reads AGLDK. Lys-65 contacts substrate. 110–114 provides a ligand contact to substrate; it reads NRMGF. Residues Asn-138 and Asn-171 each contribute to the FMN site. A substrate-binding site is contributed by Asn-171. Ser-174 (nucleophile) is an active-site residue. Asn-176 contacts substrate. FMN is bound by residues Lys-216 and Thr-244. Position 245–246 (245–246) interacts with substrate; it reads NT. Residues Gly-267, Gly-296, and 317 to 318 contribute to the FMN site; that span reads YS.

This sequence belongs to the dihydroorotate dehydrogenase family. Type 2 subfamily. Monomer. FMN serves as cofactor.

It is found in the cell membrane. The catalysed reaction is (S)-dihydroorotate + a quinone = orotate + a quinol. It participates in pyrimidine metabolism; UMP biosynthesis via de novo pathway; orotate from (S)-dihydroorotate (quinone route): step 1/1. Functionally, catalyzes the conversion of dihydroorotate to orotate with quinone as electron acceptor. The chain is Dihydroorotate dehydrogenase (quinone) from Teredinibacter turnerae (strain ATCC 39867 / T7901).